A 417-amino-acid chain; its full sequence is Gamma-glutamyl phosphate reductase (417 aa).

Belongs to the gamma-glutamyl phosphate reductase family.

It is found in the cytoplasm. It carries out the reaction L-glutamate 5-semialdehyde + phosphate + NADP(+) = L-glutamyl 5-phosphate + NADPH + H(+). Its pathway is amino-acid biosynthesis; L-proline biosynthesis; L-glutamate 5-semialdehyde from L-glutamate: step 2/2. In terms of biological role, catalyzes the NADPH-dependent reduction of L-glutamate 5-phosphate into L-glutamate 5-semialdehyde and phosphate. The product spontaneously undergoes cyclization to form 1-pyrroline-5-carboxylate. This Escherichia coli O7:K1 (strain IAI39 / ExPEC) protein is Gamma-glutamyl phosphate reductase.